Here is a 373-residue protein sequence, read N- to C-terminus: Integrator complex subunit 15 (373 aa).

It belongs to the Integrator subunit 15 family. As to quaternary structure, belongs to the multiprotein complex Integrator, at least composed of IntS1, IntS2, IntS3, IntS4, omd/IntS5, IntS6, defl/IntS7, IntS8, IntS9, IntS10, IntS11, IntS12, asun/IntS13, IntS14 and IntS15. The core complex associates with protein phosphatase 2A subunits mts/PP2A and Pp2A-29B, to form the Integrator-PP2A (INTAC) complex.

The protein localises to the nucleus. Component of the integrator complex, a multiprotein complex that terminates RNA polymerase II (Pol II) transcription in the promoter-proximal region of genes. The integrator complex provides a quality checkpoint during transcription elongation by driving premature transcription termination of transcripts that are unfavorably configured for transcriptional elongation: the complex terminates transcription by (1) catalyzing dephosphorylation of the C-terminal domain (CTD) of Pol II subunit Rbp1 and Spt5, and (2) degrading the exiting nascent RNA transcript via endonuclease activity. The integrator complex is also involved in the 3'-end processing of the U7 snRNA, and also the spliceosomal snRNAs U1, U2, U4 and U5. The protein is Integrator complex subunit 15 of Drosophila melanogaster (Fruit fly).